Consider the following 150-residue polypeptide: Transcription antitermination protein NusB (150 aa).

The protein belongs to the NusB family.

Its function is as follows. Involved in transcription antitermination. Required for transcription of ribosomal RNA (rRNA) genes. Binds specifically to the boxA antiterminator sequence of the ribosomal RNA (rrn) operons. The chain is Transcription antitermination protein NusB from Chloroflexus aggregans (strain MD-66 / DSM 9485).